The chain runs to 275 residues: Formamidopyrimidine-DNA glycosylase (275 aa).

The active-site Schiff-base intermediate with DNA is the P2. The Proton donor role is filled by E3. The active-site Proton donor; for beta-elimination activity is K58. Residues H93, R111, and R156 each coordinate DNA. Residues 241-275 (FAYDRAGLPCRVCGTPIRQIVQGQRSTYFCPTCQR) form an FPG-type zinc finger. The Proton donor; for delta-elimination activity role is filled by R265.

The protein belongs to the FPG family. Monomer. It depends on Zn(2+) as a cofactor.

It carries out the reaction Hydrolysis of DNA containing ring-opened 7-methylguanine residues, releasing 2,6-diamino-4-hydroxy-5-(N-methyl)formamidopyrimidine.. The enzyme catalyses 2'-deoxyribonucleotide-(2'-deoxyribose 5'-phosphate)-2'-deoxyribonucleotide-DNA = a 3'-end 2'-deoxyribonucleotide-(2,3-dehydro-2,3-deoxyribose 5'-phosphate)-DNA + a 5'-end 5'-phospho-2'-deoxyribonucleoside-DNA + H(+). In terms of biological role, involved in base excision repair of DNA damaged by oxidation or by mutagenic agents. Acts as a DNA glycosylase that recognizes and removes damaged bases. Has a preference for oxidized purines, such as 7,8-dihydro-8-oxoguanine (8-oxoG). Has AP (apurinic/apyrimidinic) lyase activity and introduces nicks in the DNA strand. Cleaves the DNA backbone by beta-delta elimination to generate a single-strand break at the site of the removed base with both 3'- and 5'-phosphates. The protein is Formamidopyrimidine-DNA glycosylase of Burkholderia vietnamiensis (strain G4 / LMG 22486) (Burkholderia cepacia (strain R1808)).